The primary structure comprises 205 residues: Ribosomal RNA large subunit methyltransferase E (205 aa).

S-adenosyl-L-methionine contacts are provided by Gly50, Trp52, Asp67, Asn83, and Asp111. Catalysis depends on Lys151, which acts as the Proton acceptor.

The protein belongs to the class I-like SAM-binding methyltransferase superfamily. RNA methyltransferase RlmE family.

It localises to the cytoplasm. It catalyses the reaction uridine(2552) in 23S rRNA + S-adenosyl-L-methionine = 2'-O-methyluridine(2552) in 23S rRNA + S-adenosyl-L-homocysteine + H(+). Specifically methylates the uridine in position 2552 of 23S rRNA at the 2'-O position of the ribose in the fully assembled 50S ribosomal subunit. The sequence is that of Ribosomal RNA large subunit methyltransferase E from Thermoplasma acidophilum (strain ATCC 25905 / DSM 1728 / JCM 9062 / NBRC 15155 / AMRC-C165).